The following is a 204-amino-acid chain: Fluoride-specific ion channel FluC 3 (204 aa).

Residues M1–T16 show a composition bias toward basic and acidic residues. Residues M1–P53 form a disordered region. Pro residues predominate over residues R32–E46. 4 consecutive transmembrane segments (helical) span residues V62 to L82, F96 to I116, P125 to T145, and A158 to I178. Na(+) contacts are provided by G133 and T136.

Belongs to the fluoride channel Fluc/FEX (TC 1.A.43) family.

It localises to the cell membrane. It carries out the reaction fluoride(in) = fluoride(out). With respect to regulation, na(+) is not transported, but it plays an essential structural role and its presence is essential for fluoride channel function. Its function is as follows. Fluoride-specific ion channel. Important for reducing fluoride concentration in the cell, thus reducing its toxicity. The polypeptide is Fluoride-specific ion channel FluC 3 (Streptomyces avermitilis (strain ATCC 31267 / DSM 46492 / JCM 5070 / NBRC 14893 / NCIMB 12804 / NRRL 8165 / MA-4680)).